A 427-amino-acid polypeptide reads, in one-letter code: Enolase (427 aa).

A (2R)-2-phosphoglycerate-binding site is contributed by glutamine 163. The active-site Proton donor is the glutamate 205. Positions 242, 285, and 312 each coordinate Mg(2+). Residues lysine 337, arginine 366, serine 367, and lysine 388 each contribute to the (2R)-2-phosphoglycerate site. Catalysis depends on lysine 337, which acts as the Proton acceptor.

This sequence belongs to the enolase family. It depends on Mg(2+) as a cofactor.

The protein localises to the cytoplasm. It localises to the secreted. Its subcellular location is the cell surface. It carries out the reaction (2R)-2-phosphoglycerate = phosphoenolpyruvate + H2O. Its pathway is carbohydrate degradation; glycolysis; pyruvate from D-glyceraldehyde 3-phosphate: step 4/5. Functionally, catalyzes the reversible conversion of 2-phosphoglycerate (2-PG) into phosphoenolpyruvate (PEP). It is essential for the degradation of carbohydrates via glycolysis. The polypeptide is Enolase (Paraburkholderia phymatum (strain DSM 17167 / CIP 108236 / LMG 21445 / STM815) (Burkholderia phymatum)).